Consider the following 224-residue polypeptide: uncharacterized protein (224 aa).

This is an uncharacterized protein from Acanthamoeba polyphaga mimivirus (APMV).